Reading from the N-terminus, the 108-residue chain is Glutaredoxin 4 (108 aa).

Residues 4 to 106 form the Glutaredoxin domain; the sequence is FQKIKKQIQD…KLILKVKKKY (103 aa). K21 contacts glutathione. Position 29 (C29) interacts with [2Fe-2S] cluster. Glutathione is bound by residues R58, F70, and 83-84; that span reads CS.

The protein belongs to the glutaredoxin family. Monothiol subfamily. In terms of assembly, homodimer.

It localises to the cytoplasm. Functionally, monothiol glutaredoxin involved in the biogenesis of iron-sulfur clusters. The polypeptide is Glutaredoxin 4 (grxD) (Buchnera aphidicola subsp. Acyrthosiphon pisum (strain APS) (Acyrthosiphon pisum symbiotic bacterium)).